The sequence spans 133 residues: Basic phospholipase A2 beta-bungarotoxin A-AL2 chain (133 aa).

The first 5 residues, 1 to 5 (FLLGA), serve as a signal peptide directing secretion. A propeptide spanning residues 6 to 13 (ANIPPHPL) is cleaved from the precursor. 6 cysteine pairs are disulfide-bonded: cysteine 40–cysteine 132, cysteine 42–cysteine 58, cysteine 57–cysteine 113, cysteine 64–cysteine 106, cysteine 74–cysteine 99, and cysteine 92–cysteine 104. Ca(2+) contacts are provided by tyrosine 41, glycine 43, and glycine 45. The active site involves histidine 61. Aspartate 62 is a binding site for Ca(2+). The active site involves aspartate 107.

This sequence belongs to the phospholipase A2 family. Group I subfamily. D49 sub-subfamily. In terms of assembly, heterodimer; disulfide-linked. The A chains have phospholipase A2 activity and the B chains show homology with the basic protease inhibitors. The cofactor is Ca(2+). In terms of tissue distribution, expressed by the venom gland.

The protein resides in the secreted. The enzyme catalyses a 1,2-diacyl-sn-glycero-3-phosphocholine + H2O = a 1-acyl-sn-glycero-3-phosphocholine + a fatty acid + H(+). Functionally, snake venom phospholipase A2 (PLA2) that inhibits neuromuscular transmission by blocking acetylcholine release from the nerve termini. PLA2 catalyzes the calcium-dependent hydrolysis of the 2-acyl groups in 3-sn-phosphoglycerides. This Bungarus multicinctus (Many-banded krait) protein is Basic phospholipase A2 beta-bungarotoxin A-AL2 chain.